A 162-amino-acid chain; its full sequence is 2-C-methyl-D-erythritol 2,4-cyclodiphosphate synthase (162 aa).

Asp12 and His14 together coordinate a divalent metal cation. Residues 12–14 (DVH) and 38–39 (HS) each bind 4-CDP-2-C-methyl-D-erythritol 2-phosphate. Position 46 (His46) interacts with a divalent metal cation. 4-CDP-2-C-methyl-D-erythritol 2-phosphate contacts are provided by residues 60–62 (DIG), 65–69 (FPDTD), and Arg146.

The protein belongs to the IspF family. In terms of assembly, homotrimer. It depends on a divalent metal cation as a cofactor.

The catalysed reaction is 4-CDP-2-C-methyl-D-erythritol 2-phosphate = 2-C-methyl-D-erythritol 2,4-cyclic diphosphate + CMP. Its pathway is isoprenoid biosynthesis; isopentenyl diphosphate biosynthesis via DXP pathway; isopentenyl diphosphate from 1-deoxy-D-xylulose 5-phosphate: step 4/6. Involved in the biosynthesis of isopentenyl diphosphate (IPP) and dimethylallyl diphosphate (DMAPP), two major building blocks of isoprenoid compounds. Catalyzes the conversion of 4-diphosphocytidyl-2-C-methyl-D-erythritol 2-phosphate (CDP-ME2P) to 2-C-methyl-D-erythritol 2,4-cyclodiphosphate (ME-CPP) with a corresponding release of cytidine 5-monophosphate (CMP). This chain is 2-C-methyl-D-erythritol 2,4-cyclodiphosphate synthase, found in Bordetella avium (strain 197N).